The sequence spans 108 residues: Nucleoid-associated protein Bcen_6253 (108 aa).

Positions 85 to 95 (ATSQEKMSGMT) are enriched in polar residues. A disordered region spans residues 85–108 (ATSQEKMSGMTSGLPLPPGFKLPF). A compositionally biased stretch (pro residues) spans 99–108 (PLPPGFKLPF).

It belongs to the YbaB/EbfC family. As to quaternary structure, homodimer.

It is found in the cytoplasm. The protein resides in the nucleoid. Binds to DNA and alters its conformation. May be involved in regulation of gene expression, nucleoid organization and DNA protection. This is Nucleoid-associated protein Bcen_6253 from Burkholderia orbicola (strain AU 1054).